The chain runs to 365 residues: Probable protein kinase At2g41970 (365 aa).

Residues methionine 1–proline 50 are disordered. Residues phenylalanine 73–leucine 354 enclose the Protein kinase domain. ATP-binding positions include isoleucine 79–valine 87 and lysine 100. The residue at position 146 (tyrosine 146) is a Phosphotyrosine. The active-site Proton acceptor is aspartate 204. Phosphoserine occurs at positions 208 and 238. A phosphothreonine mark is found at threonine 239 and threonine 244. The residue at position 252 (tyrosine 252) is a Phosphotyrosine.

The protein belongs to the protein kinase superfamily. Tyr protein kinase family.

This chain is Probable protein kinase At2g41970, found in Arabidopsis thaliana (Mouse-ear cress).